We begin with the raw amino-acid sequence, 64 residues long: Frontoxin V (64 aa).

Disulfide bonds link Cys-3–Cys-24, Cys-6–Cys-11, Cys-17–Cys-41, Cys-45–Cys-57, and Cys-58–Cys-63.

In terms of tissue distribution, expressed by the venom gland.

It is found in the secreted. In terms of biological role, produces peripheral paralysis by blocking neuromuscular transmission at the postsynaptic site. Binds to the muscular nicotinic acetylcholine receptor (nAChR). The polypeptide is Frontoxin V (Micrurus frontalis (Coral snake)).